A 214-amino-acid chain; its full sequence is Protein DMP6 (214 aa).

The next 4 membrane-spanning stretches (helical) occupy residues 52–72 (LANL…PICT), 83–103 (FMTA…SFTD), 143–163 (FIDF…VLFD), and 178–198 (VVEL…MVFA).

This sequence belongs to the plant DMP1 protein family. In terms of tissue distribution, expressed constitutively in leaves, stems, flowers, siliques and roots (e.g. root hairs).

It is found in the vacuole membrane. Its function is as follows. Involved in membrane remodeling. The chain is Protein DMP6 from Arabidopsis thaliana (Mouse-ear cress).